The following is a 460-amino-acid chain: Ankyrin repeat and MYND domain-containing protein 2 (460 aa).

3 ANK repeats span residues 45-74 (HGMT…DVNC), 79-108 (HGYT…ETDV), and 159-188 (KLAG…NPLL). Zn(2+)-binding residues include Cys320, Cys323, Cys332, Cys335, Cys341, Cys345, His353, and Cys357. The MYND-type zinc finger occupies 320–357 (CTTCGEKGADKRCSVCKVVMYCDQNCQKTHWFTHKKVC). Composition is skewed to basic and acidic residues over residues 371–387 (AAKE…KDEA) and 425–436 (ELTKEPEARAPR). The disordered stretch occupies residues 371–460 (AAKEKRRQEK…ALQKIQDSEE (90 aa)).

The protein localises to the cell projection. It localises to the cilium. Its function is as follows. May be involved in the trafficking of signaling proteins to the cilia. This chain is Ankyrin repeat and MYND domain-containing protein 2 (ANKMY2), found in Gallus gallus (Chicken).